Consider the following 398-residue polypeptide: Acetate kinase (398 aa).

N7 is a binding site for Mg(2+). K14 serves as a coordination point for ATP. Residue R91 coordinates substrate. D148 acts as the Proton donor/acceptor in catalysis. ATP is bound by residues 208–212, 283–285, and 331–335; these read HIGNG, DLR, and GVGEN. E385 provides a ligand contact to Mg(2+).

It belongs to the acetokinase family. As to quaternary structure, homodimer. Mg(2+) is required as a cofactor. It depends on Mn(2+) as a cofactor.

It is found in the cytoplasm. It catalyses the reaction acetate + ATP = acetyl phosphate + ADP. It participates in metabolic intermediate biosynthesis; acetyl-CoA biosynthesis; acetyl-CoA from acetate: step 1/2. Its function is as follows. Catalyzes the formation of acetyl phosphate from acetate and ATP. Can also catalyze the reverse reaction. This is Acetate kinase from Porphyromonas gingivalis (strain ATCC 33277 / DSM 20709 / CIP 103683 / JCM 12257 / NCTC 11834 / 2561).